The primary structure comprises 319 residues: Cell division protein FtsQ (319 aa).

The interval 1 to 53 is disordered; it reads MDSREDMVPDVLLEAPNPRRRQSADTSTERPTRPARREQGYARVTPRGERMGN. The Cytoplasmic portion of the chain corresponds to 1-70; sequence MDSREDMVPD…PDFFAWFDPR (70 aa). Over residues 27–52 the composition is skewed to basic and acidic residues; the sequence is STERPTRPARREQGYARVTPRGERMG. A helical membrane pass occupies residues 71–87; that stretch reads WLWVPLMVCLAVGGYWA. The Periplasmic portion of the chain corresponds to 88–319; it reads YEPLEKLLER…NATRNAPTHP (232 aa). In terms of domain architecture, POTRA spans 97 to 166; it reads RPFKSVVVEG…DTLVVKIAEQ (70 aa).

The protein belongs to the FtsQ/DivIB family. FtsQ subfamily. Part of a complex composed of FtsB, FtsL and FtsQ.

It is found in the cell inner membrane. Its function is as follows. Essential cell division protein. May link together the upstream cell division proteins, which are predominantly cytoplasmic, with the downstream cell division proteins, which are predominantly periplasmic. May control correct divisome assembly. The polypeptide is Cell division protein FtsQ (Cellvibrio japonicus (strain Ueda107) (Pseudomonas fluorescens subsp. cellulosa)).